The following is a 96-amino-acid chain: uncharacterized protein (96 aa).

Residues 53-71 traverse the membrane as a helical segment; sequence VLLMPLLQSFVLSLALMGV.

The protein localises to the membrane. This is an uncharacterized protein from Saccharomyces cerevisiae (strain ATCC 204508 / S288c) (Baker's yeast).